An 819-amino-acid chain; its full sequence is Ion-translocating oxidoreductase complex subunit C (819 aa).

2 consecutive 4Fe-4S ferredoxin-type domains span residues 368–398 (EYAEPEAEQACIRCSSCSDACPVNLMPQQLY) and 408–437 (KSEEYALKDCIECGICAYVCPSHIPLIQYF). [4Fe-4S] cluster is bound by residues Cys378, Cys381, Cys384, Cys388, Cys417, Cys420, Cys423, and Cys427. 2 stretches are compositionally biased toward basic and acidic residues: residues 465-477 (QARMEREEQERKA) and 485-513 (ARREELAQTKGEDPVKAALERLKAKKANE). Disordered stretches follow at residues 465–568 (QARM…NAKK), 580–677 (AKKL…TALD), and 692–793 (AKKL…PKKA). Polar residues-rich tracts occupy residues 554–565 (VENQEQQTQPTN) and 587–601 (NSTSEAISNSQTAEN). Residues 602–614 (QVEKTKSAVEKTQ) are compositionally biased toward basic and acidic residues. Positions 641–656 (QTNSTSEAISNSQTAE) are enriched in polar residues. A compositionally biased stretch (basic and acidic residues) spans 658 to 671 (EVEKTKSAVEKTEE). Composition is skewed to polar residues over residues 699–712 (NSASEAISNSQTAE) and 755–768 (NSTSEAISNSQTAE). Residues 770 to 782 (EVEKTKSAVEKTQ) are compositionally biased toward basic and acidic residues.

It belongs to the 4Fe4S bacterial-type ferredoxin family. RnfC subfamily. The complex is composed of six subunits: RnfA, RnfB, RnfC, RnfD, RnfE and RnfG. The cofactor is [4Fe-4S] cluster.

The protein localises to the cell inner membrane. Its function is as follows. Part of a membrane-bound complex that couples electron transfer with translocation of ions across the membrane. This Haemophilus influenzae (strain ATCC 51907 / DSM 11121 / KW20 / Rd) protein is Ion-translocating oxidoreductase complex subunit C.